A 660-amino-acid polypeptide reads, in one-letter code: Bifunctional polymyxin resistance protein ArnA (660 aa).

The segment at 1-304 is formyltransferase ArnAFT; that stretch reads MKAVIFAYHD…TLGLVAGARL (304 aa). The active-site Proton donor; for formyltransferase activity is the His104. Residues Arg114 and 136–140 each bind (6R)-10-formyltetrahydrofolate; that span reads VKRAD. Residues 314 to 660 form a dehydrogenase ArnADH region; the sequence is RRIRVLILGV…RSVDVAERAS (347 aa). Residues Asp347 and 368–369 contribute to the NAD(+) site; that span reads DI. Residues Ala393, Tyr398, and 432–433 each bind UDP-alpha-D-glucuronate; that span reads TS. Glu434 acts as the Proton acceptor; for decarboxylase activity in catalysis. Residues Arg460, Asn492, 526–535, and Tyr613 contribute to the UDP-alpha-D-glucuronate site; that span reads KLIDGGQQKR. Arg619 acts as the Proton donor; for decarboxylase activity in catalysis.

In the N-terminal section; belongs to the Fmt family. UDP-L-Ara4N formyltransferase subfamily. The protein in the C-terminal section; belongs to the NAD(P)-dependent epimerase/dehydratase family. UDP-glucuronic acid decarboxylase subfamily. As to quaternary structure, homohexamer, formed by a dimer of trimers.

It catalyses the reaction UDP-alpha-D-glucuronate + NAD(+) = UDP-beta-L-threo-pentopyranos-4-ulose + CO2 + NADH. It carries out the reaction UDP-4-amino-4-deoxy-beta-L-arabinose + (6R)-10-formyltetrahydrofolate = UDP-4-deoxy-4-formamido-beta-L-arabinose + (6S)-5,6,7,8-tetrahydrofolate + H(+). The protein operates within nucleotide-sugar biosynthesis; UDP-4-deoxy-4-formamido-beta-L-arabinose biosynthesis; UDP-4-deoxy-4-formamido-beta-L-arabinose from UDP-alpha-D-glucuronate: step 1/3. It functions in the pathway nucleotide-sugar biosynthesis; UDP-4-deoxy-4-formamido-beta-L-arabinose biosynthesis; UDP-4-deoxy-4-formamido-beta-L-arabinose from UDP-alpha-D-glucuronate: step 3/3. It participates in bacterial outer membrane biogenesis; lipopolysaccharide biosynthesis. Bifunctional enzyme that catalyzes the oxidative decarboxylation of UDP-glucuronic acid (UDP-GlcUA) to UDP-4-keto-arabinose (UDP-Ara4O) and the addition of a formyl group to UDP-4-amino-4-deoxy-L-arabinose (UDP-L-Ara4N) to form UDP-L-4-formamido-arabinose (UDP-L-Ara4FN). The modified arabinose is attached to lipid A and is required for resistance to polymyxin and cationic antimicrobial peptides. The protein is Bifunctional polymyxin resistance protein ArnA of Salmonella paratyphi B (strain ATCC BAA-1250 / SPB7).